Consider the following 225-residue polypeptide: Ribosomal RNA large subunit methyltransferase E (225 aa).

S-adenosyl-L-methionine-binding residues include Gly-79, Trp-81, Asp-97, Asp-113, and Asp-137. The Proton acceptor role is filled by Lys-177.

This sequence belongs to the class I-like SAM-binding methyltransferase superfamily. RNA methyltransferase RlmE family.

It localises to the cytoplasm. It catalyses the reaction uridine(2552) in 23S rRNA + S-adenosyl-L-methionine = 2'-O-methyluridine(2552) in 23S rRNA + S-adenosyl-L-homocysteine + H(+). Specifically methylates the uridine in position 2552 of 23S rRNA at the 2'-O position of the ribose in the fully assembled 50S ribosomal subunit. The polypeptide is Ribosomal RNA large subunit methyltransferase E (Acidiphilium cryptum (strain JF-5)).